The primary structure comprises 418 residues: Acyl-coenzyme A amino acid N-acyltransferase 2 (418 aa).

Catalysis depends on charge relay system residues Ser-234, Asp-327, and His-361. The short motif at 416–418 (GKL) is the Microbody targeting signal element.

This sequence belongs to the C/M/P thioester hydrolase family.

The protein localises to the peroxisome. Functionally, acyltransferase which efficiently conjugates very long-chain and long-chain fatty acids to taurine. Shows no conjugation activity in the presence of glycine. The sequence is that of Acyl-coenzyme A amino acid N-acyltransferase 2 from Rattus norvegicus (Rat).